Here is a 257-residue protein sequence, read N- to C-terminus: Glucose-1-phosphate cytidylyltransferase (257 aa).

Substrate is bound by residues 6–10 (LAGGL), 11–13 (GTR), Lys-23, Ser-104, Arg-109, and Gly-128. Mg(2+) is bound by residues Asp-129 and Asp-234.

Belongs to the glucose-1-phosphate cytidylyltransferase family. Homohexamer. Requires Mg(2+) as cofactor.

The catalysed reaction is alpha-D-glucose 1-phosphate + CTP + H(+) = CDP-D-glucose + diphosphate. It functions in the pathway nucleotide-sugar biosynthesis; CDP-3,6-dideoxy-D-mannose biosynthesis; CDP-3,6-dideoxy-D-mannose from CTP and alpha-D-glucose 1-phosphate: step 1/5. The protein operates within bacterial outer membrane biogenesis; LPS O-antigen biosynthesis. Its function is as follows. Involved in the biosynthesis of the tyvelose, a 3,6-dideoxyhexose found in the O-antigen of the surface lipopolysaccharides. It catalyzes the transfer of a CMP moiety from CTP to glucose 1-phosphate. This chain is Glucose-1-phosphate cytidylyltransferase (rfbF), found in Salmonella typhimurium (strain LT2 / SGSC1412 / ATCC 700720).